The following is a 142-amino-acid chain: Prefoldin subunit alpha (142 aa).

This sequence belongs to the prefoldin subunit alpha family. In terms of assembly, heterohexamer of two alpha and four beta subunits.

It localises to the cytoplasm. Its function is as follows. Molecular chaperone capable of stabilizing a range of proteins. Seems to fulfill an ATP-independent, HSP70-like function in archaeal de novo protein folding. The polypeptide is Prefoldin subunit alpha (Methanosarcina acetivorans (strain ATCC 35395 / DSM 2834 / JCM 12185 / C2A)).